The sequence spans 488 residues: DNA polymerase II small subunit (488 aa).

This sequence belongs to the DNA polymerase delta/II small subunit family. Heterodimer of a large subunit and a small subunit.

It carries out the reaction DNA(n) + a 2'-deoxyribonucleoside 5'-triphosphate = DNA(n+1) + diphosphate. It catalyses the reaction Exonucleolytic cleavage in the 3'- to 5'-direction to yield nucleoside 5'-phosphates.. Possesses two activities: a DNA synthesis (polymerase) and an exonucleolytic activity that degrades single-stranded DNA in the 3' to 5' direction. Has a template-primer preference which is characteristic of a replicative DNA polymerase. The protein is DNA polymerase II small subunit (polB) of Archaeoglobus fulgidus (strain ATCC 49558 / DSM 4304 / JCM 9628 / NBRC 100126 / VC-16).